Consider the following 244-residue polypeptide: Claudin-12 (244 aa).

The Cytoplasmic portion of the chain corresponds to 1–10; the sequence is MGCRDVHAAT. The helical transmembrane segment at 11–31 threads the bilayer; that stretch reads VLSFLCGIASVAGLFAGTLLP. Residues 32–87 are Extracellular-facing; that stretch reads NWRKLRLITFNRNEKNLTVYTGLWVKCARYDGSSDCLMYDTTWYSSVDQLDLRVLQ. The chain crosses the membrane as a helical span at residues 88–108; sequence FALPLSMLIAMGALLLCLIGM. The Cytoplasmic portion of the chain corresponds to 109–135; the sequence is CNTAFRSSVPNIKLAKCLVNSAGCHLV. The helical transmembrane segment at 136–156 threads the bilayer; sequence AGLLFFLAGTVSLSPSIWVIF. The Extracellular segment spans residues 157 to 174; the sequence is YNIHLNKKFEPVFSFDYA. The chain crosses the membrane as a helical span at residues 175 to 195; the sequence is VYVTIASAGGLFMTSLILFIW. Over 196-244 the chain is Cytoplasmic; the sequence is YCTCKSLPSPFWQPLYSHPPSMHTYSQPYSARSRLSAIEIDIPVVSHTT. Phosphoserine is present on residues serine 228 and serine 231.

Belongs to the claudin family. In terms of assembly, interacts with OCLN.

Its subcellular location is the cell junction. The protein resides in the tight junction. It is found in the cell membrane. Plays a major role in tight junction-specific obliteration of the intercellular space, through calcium-independent cell-adhesion activity. The protein is Claudin-12 (CLDN12) of Pongo abelii (Sumatran orangutan).